Consider the following 129-residue polypeptide: Glycine cleavage system H protein (129 aa).

In terms of domain architecture, Lipoyl-binding spans leucine 24–arginine 106. Residue lysine 65 is modified to N6-lipoyllysine.

This sequence belongs to the GcvH family. In terms of assembly, the glycine cleavage system is composed of four proteins: P, T, L and H. The cofactor is (R)-lipoate.

The glycine cleavage system catalyzes the degradation of glycine. The H protein shuttles the methylamine group of glycine from the P protein to the T protein. In Synechococcus sp. (strain CC9311), this protein is Glycine cleavage system H protein.